A 118-amino-acid chain; its full sequence is MFNLNQTKKASLPIKMRIRKGDTVQVINGKEKGKTGEVLKTLPIENRVIVQGINLRTRHVKPTQEGESGRIVTEEASLHASNVMVYSTKQKTASRVEVFIDKDGSKKRRLKKTGELID.

Belongs to the universal ribosomal protein uL24 family. Part of the 50S ribosomal subunit.

In terms of biological role, one of two assembly initiator proteins, it binds directly to the 5'-end of the 23S rRNA, where it nucleates assembly of the 50S subunit. Its function is as follows. One of the proteins that surrounds the polypeptide exit tunnel on the outside of the subunit. The sequence is that of Large ribosomal subunit protein uL24 from Prochlorococcus marinus (strain SARG / CCMP1375 / SS120).